The following is a 228-amino-acid chain: Ribose-5-phosphate isomerase A (228 aa).

Substrate-binding positions include 32-35 (TGST), 85-88 (DGAD), and 98-101 (KGGG). Glu107 serves as the catalytic Proton acceptor. Lys125 is a substrate binding site.

Belongs to the ribose 5-phosphate isomerase family. In terms of assembly, homodimer.

It carries out the reaction aldehydo-D-ribose 5-phosphate = D-ribulose 5-phosphate. Its pathway is carbohydrate degradation; pentose phosphate pathway; D-ribose 5-phosphate from D-ribulose 5-phosphate (non-oxidative stage): step 1/1. In terms of biological role, catalyzes the reversible conversion of ribose-5-phosphate to ribulose 5-phosphate. This chain is Ribose-5-phosphate isomerase A, found in Cupriavidus taiwanensis (strain DSM 17343 / BCRC 17206 / CCUG 44338 / CIP 107171 / LMG 19424 / R1) (Ralstonia taiwanensis (strain LMG 19424)).